The sequence spans 141 residues: uncharacterized protein (141 aa).

The protein belongs to the mimivirus L163/R849 family.

This is an uncharacterized protein from Acanthamoeba polyphaga mimivirus (APMV).